Consider the following 236-residue polypeptide: Biosynthetic peptidoglycan transglycosylase (236 aa).

Residues 17–37 traverse the membrane as a helical segment; sequence IVILVALALLALPYLLTILYG.

Belongs to the glycosyltransferase 51 family.

The protein localises to the cell inner membrane. It catalyses the reaction [GlcNAc-(1-&gt;4)-Mur2Ac(oyl-L-Ala-gamma-D-Glu-L-Lys-D-Ala-D-Ala)](n)-di-trans,octa-cis-undecaprenyl diphosphate + beta-D-GlcNAc-(1-&gt;4)-Mur2Ac(oyl-L-Ala-gamma-D-Glu-L-Lys-D-Ala-D-Ala)-di-trans,octa-cis-undecaprenyl diphosphate = [GlcNAc-(1-&gt;4)-Mur2Ac(oyl-L-Ala-gamma-D-Glu-L-Lys-D-Ala-D-Ala)](n+1)-di-trans,octa-cis-undecaprenyl diphosphate + di-trans,octa-cis-undecaprenyl diphosphate + H(+). Its pathway is cell wall biogenesis; peptidoglycan biosynthesis. Peptidoglycan polymerase that catalyzes glycan chain elongation from lipid-linked precursors. The protein is Biosynthetic peptidoglycan transglycosylase of Rhodopseudomonas palustris (strain ATCC BAA-98 / CGA009).